We begin with the raw amino-acid sequence, 2248 residues long: Putative Polycomb group protein ASXL3 (2248 aa).

One can recognise an HTH HARE-type domain in the interval 10–84 (RTWAEAARLA…KSGLYALKKE (75 aa)). Positions 156–232 (ALKQALRQQQ…GKQTSQHLKR (77 aa)) are disordered. The segment covering 203–216 (KNGEADSSDKEMKH) has biased composition (basic and acidic residues). The segment covering 219–228 (KSPTGKQTSQ) has biased composition (polar residues). A DEUBAD domain is found at 254 to 363 (PGSILVNTNL…FERFYGEKLG (110 aa)). Disordered stretches follow at residues 368-414 (ESVK…PASP), 547-583 (TSSMTHVSDTEHKESETAVETSTPKIKTGSSSLEGQF), 607-643 (CISETSFSSESPEGACTSLPSPGGETQSTSEESCTPA), 703-726 (EASPVSNLPLTSETSPMSDLPLTS), 762-853 (ERMA…ASIP), 869-1052 (LQRT…TGAR), 1123-1152 (TSKETRLPPPLSSKEGPPNLEVSSTPETKM), 1183-1203 (QQSLNPSKLPETATDLSVHSS), 1431-1462 (KLSAESLDKNSGPRNRADNSGKPQQPPGGFAP), 1573-1596 (TAPSHNFAEQARGPAPFKSEADTT), and 1990-2068 (LSPN…KRLS). Polar residues-rich tracts occupy residues 371-389 (KLTTGPNNAGAQSSSSCGT), 395-407 (SAQTALAEQQPKS), 564-580 (AVETSTPKIKTGSSSLE), 607-617 (CISETSFSSES), and 624-643 (SLPSPGGETQSTSEESCTPA). The segment covering 796–818 (NLTSQQKNLSNTPEPIIMSSSSI) has biased composition (polar residues). A compositionally biased stretch (low complexity) spans 937 to 949 (SHTSKSSEPSKSP). 3 stretches are compositionally biased toward basic and acidic residues: residues 950–968 (DGIRNESRDSEISKRKTAE), 975–987 (CKEKRARIEDDQS), and 997–1008 (PEKEQPPREEPR). The segment covering 1036–1046 (RASTSTSVSGG) has biased composition (polar residues). Residues 2016–2046 (HPPPPPPPPPPPPLALPPPPPPPPPLPPPLP) are compositionally biased toward pro residues. The segment at 2210–2247 (ELKCSCRLKAMIVCKGCGAFCHDDCIGPSKLCVACLVV) adopts a PHD-type; atypical zinc-finger fold.

It belongs to the Asx family. In terms of assembly, core component of the polycomb repressive deubiquitinase (PR-DUB) complex, at least composed of BAP1, one of ASXL1, ASXL2 or (probably) ASXL3, and one of MBD5 or MBD6. Distinct combinations of ASXL and MBD proteins may preferentially bind specific histone modification marks. The PR-DUB core associates with a number of accessory proteins, including FOXK1, FOXK2, KDM1B, HCFC1 and OGT; KDM1B specifically associates with ASXL2 PR-DUB complexes. Interacts (via PHD domain) with MBD5 and MBD6 (via MBD domain); the interaction is probably direct and mediates association of MBD proteins with the PR-DUB core. As to expression, expressed in pancreatic islets, testis, neuroblastoma, head and neck tumor.

It is found in the nucleus. Functionally, putative Polycomb group (PcG) protein. PcG proteins act by forming multiprotein complexes, which are required to maintain the transcriptionally repressive state of homeotic genes throughout development. PcG proteins are not required to initiate repression, but to maintain it during later stages of development. They probably act via methylation of histones, rendering chromatin heritably changed in its expressibility. Non-catalytic component of the PR-DUB complex, a complex that specifically mediates deubiquitination of histone H2A monoubiquitinated at 'Lys-119' (H2AK119ub1). The PR-DUB complex is an epigenetic regulator of gene expression and acts as a transcriptional coactivator, affecting genes involved in development, cell communication, signaling, cell proliferation and cell viability. ASXL1, ASXL2 and ASXL3 function redundantly in the PR-DUB complex and are essential for chromatin recruitment and transcriptional activation of associated genes. The polypeptide is Putative Polycomb group protein ASXL3 (ASXL3) (Homo sapiens (Human)).